The following is a 182-amino-acid chain: Large ribosomal subunit protein uL22 (182 aa).

A disordered region spans residues 155-182 (SGVDGAKQGKKKKKTDGVEKATTKRQKQ).

The protein belongs to the universal ribosomal protein uL22 family.

The sequence is that of Large ribosomal subunit protein uL22 (RpL17) from Carabus granulatus (Ground beetle).